We begin with the raw amino-acid sequence, 87 residues long: uncharacterized protein (87 aa).

The helical transmembrane segment at 48–70 (GIYIPHTLIFWMCPRAMGTAITF) threads the bilayer.

It localises to the host membrane. This is an uncharacterized protein from Gallid herpesvirus 2 (strain Chicken/Md5/ATCC VR-987) (GaHV-2).